Here is a 178-residue protein sequence, read N- to C-terminus: Translation initiation factor IF-3 (178 aa).

Belongs to the IF-3 family. As to quaternary structure, monomer.

Its subcellular location is the cytoplasm. Its function is as follows. IF-3 binds to the 30S ribosomal subunit and shifts the equilibrium between 70S ribosomes and their 50S and 30S subunits in favor of the free subunits, thus enhancing the availability of 30S subunits on which protein synthesis initiation begins. The protein is Translation initiation factor IF-3 of Picosynechococcus sp. (strain ATCC 27264 / PCC 7002 / PR-6) (Agmenellum quadruplicatum).